Reading from the N-terminus, the 411-residue chain is MADVVVGIQWGDEGKGKIVDRIAKDYDFVVRYQGGHNAGHTIVHKGVKHSLHLMPSGVLYPQCKNIISSAVVVSIKDLCEEISAFEDLENRLFISDRAHVILPYHAKKDAFKEKSQNIGTTKKGIGPCYEDKMARSGIRMGDLLDDKILEERLNAHFKAIEPFKEAYDLGENYEKDLREYFKTHAPKICPFIKDTTSMLIEANQKGEKILLEGAQGTLLDIDLGTYPFVTSSNTTSASACVSTGLNPKAINEVIGITKAYSTRVGNGPFPSEDTTPMGDHLRTKGAEFGTTTKRPRRCGWLDLVALKYACTLNGCTQLALMKLDVLDGIDAIKVCVAYERKGERLEAFPSDLKDCAPIYQTFKGWEKSAGVRKLDDLEPNAREYIRFIEKEVGVKIRLISTSPEREDTIFL.

GTP is bound by residues 11-17 and 39-41; these read GDEGKGK and GHT. Asp-12 serves as the catalytic Proton acceptor. Positions 12 and 39 each coordinate Mg(2+). IMP is bound by residues 12–15, 37–40, Thr-121, Arg-135, Gln-215, Thr-230, and Arg-294; these read DEGK and NAGH. His-40 (proton donor) is an active-site residue. 290–296 contributes to the substrate binding site; sequence TTTKRPR. Residues Arg-296, 322–324, and 400–402 each bind GTP; these read KLD and STS.

This sequence belongs to the adenylosuccinate synthetase family. Homodimer. Mg(2+) serves as cofactor.

Its subcellular location is the cytoplasm. It carries out the reaction IMP + L-aspartate + GTP = N(6)-(1,2-dicarboxyethyl)-AMP + GDP + phosphate + 2 H(+). It participates in purine metabolism; AMP biosynthesis via de novo pathway; AMP from IMP: step 1/2. Its function is as follows. Plays an important role in the de novo pathway of purine nucleotide biosynthesis. Catalyzes the first committed step in the biosynthesis of AMP from IMP. This Helicobacter pylori (strain Shi470) protein is Adenylosuccinate synthetase.